The primary structure comprises 221 residues: Sperm acrosome membrane-associated protein 3 (221 aa).

The Cytoplasmic segment spans residues 1–69 (MGICMSMYTQ…EARSRAPRRQ (69 aa)). The chain crosses the membrane as a helical; Signal-anchor for type II membrane protein span at residues 70–90 (LCPPGITWLALAYLLSCLLAS). Over 91–221 (SKAKVFSRCE…LSDWVDGCDF (131 aa)) the chain is Extracellular. The 128-residue stretch at 94–221 (KVFSRCELAK…LSDWVDGCDF (128 aa)) folds into the C-type lysozyme domain. 4 cysteine pairs are disulfide-bonded: cysteine 99-cysteine 219, cysteine 123-cysteine 207, cysteine 157-cysteine 172, and cysteine 168-cysteine 186.

The protein belongs to the glycosyl hydrolase 22 family. Interacts with ASTL. The processed form is expressed in sperm (at protein level). Expressed strongly in testis and epididymis and weakly in pancreas.

It is found in the cytoplasmic vesicle. The protein localises to the secretory vesicle. Its subcellular location is the acrosome membrane. The protein resides in the secreted. In terms of biological role, sperm surface membrane protein that may be involved in sperm-egg plasma membrane adhesion and fusion during fertilization. It could be a potential receptor for the egg oligosaccharide residue N-acetylglucosamine, which is present in the extracellular matrix over the egg plasma membrane. The processed form has no detectable bacteriolytic activity in vitro. This is Sperm acrosome membrane-associated protein 3 (Spaca3) from Mus musculus (Mouse).